We begin with the raw amino-acid sequence, 102 residues long: Protein isd11 (102 aa).

Belongs to the complex I LYR family.

It localises to the mitochondrion. Functionally, required for mitochondrial iron-sulfur (Fe-S) protein biosynthesis. In Schizosaccharomyces pombe (strain 972 / ATCC 24843) (Fission yeast), this protein is Protein isd11 (isd11).